A 388-amino-acid polypeptide reads, in one-letter code: P2X receptor E (388 aa).

The Cytoplasmic portion of the chain corresponds to 1-28; it reads MNFRNIDWDSLFSYSTIKIVRIRDKRLG. Residues 29-49 form a helical membrane-spanning segment; it reads ILHFAFLIGIILYIIVGTIFL. At 50 to 312 the chain is on the lumenal side; it reads QKKYLVLESP…QLGQFDFQTM (263 aa). Residues 291–304 form a pore-forming motif region; it reads RHGVRIIFIQTGQL. A helical transmembrane segment spans residues 313-333; that stretch reads LLTFVSGIGLVTAASLIVDII. At 334-388 the chain is on the cytoplasmic side; the sequence is ATRIMPQRSRYQELKFQDSSINNTQKTPTNDHTPLLKDNEDTINENSYQNNSYEK. A disordered region spans residues 349–388; that stretch reads FQDSSINNTQKTPTNDHTPLLKDNEDTINENSYQNNSYEK. Composition is skewed to polar residues over residues 350 to 365 and 377 to 388; these read QDSS…TNDH and NENSYQNNSYEK.

This sequence belongs to the P2X receptor family.

The protein resides in the contractile vacuole membrane. Functionally, P2X receptors are ATP-gated ion channels that play a role in intracellular calcium signaling. Not required for the purinergic response to extracellular nucleotides. Not essential for osmoregulation. Inward currents evoked by intracellular ATP. ATP analog beta, gamma-imido-ATP is a weak partial agonist of p2xE. Exclusively selective for ATP over other nucleotides. Insensitive to copper and P2 receptor antagonists PPADS and suramin but strongly inhibited by sodium ions. More permeable to ammonium than either sodium or potassium ions and less permeable to choline. Permeable to calcium ions, but not chloride. The chain is P2X receptor E (p2xE) from Dictyostelium discoideum (Social amoeba).